Here is a 123-residue protein sequence, read N- to C-terminus: Ribonuclease P protein component (123 aa).

Belongs to the RnpA family. In terms of assembly, consists of a catalytic RNA component (M1 or rnpB) and a protein subunit.

The enzyme catalyses Endonucleolytic cleavage of RNA, removing 5'-extranucleotides from tRNA precursor.. Its function is as follows. RNaseP catalyzes the removal of the 5'-leader sequence from pre-tRNA to produce the mature 5'-terminus. It can also cleave other RNA substrates such as 4.5S RNA. The protein component plays an auxiliary but essential role in vivo by binding to the 5'-leader sequence and broadening the substrate specificity of the ribozyme. In Streptococcus pneumoniae serotype 4 (strain ATCC BAA-334 / TIGR4), this protein is Ribonuclease P protein component.